The sequence spans 218 residues: UPF0502 protein VS_II0353 (218 aa).

Belongs to the UPF0502 family.

The sequence is that of UPF0502 protein VS_II0353 from Vibrio atlanticus (strain LGP32) (Vibrio splendidus (strain Mel32)).